The sequence spans 487 residues: Glutamyl-tRNA(Gln) amidotransferase subunit A (487 aa).

K78 acts as the Charge relay system in catalysis. Over residues 135-144 the composition is skewed to polar residues; the sequence is SAYQTTTNPW. Residues 135-155 form a disordered region; the sequence is SAYQTTTNPWDASRVPGGSSG. The Charge relay system role is filled by S153. S177 (acyl-ester intermediate) is an active-site residue.

It belongs to the amidase family. GatA subfamily. Heterotrimer of A, B and C subunits.

It catalyses the reaction L-glutamyl-tRNA(Gln) + L-glutamine + ATP + H2O = L-glutaminyl-tRNA(Gln) + L-glutamate + ADP + phosphate + H(+). Functionally, allows the formation of correctly charged Gln-tRNA(Gln) through the transamidation of misacylated Glu-tRNA(Gln) in organisms which lack glutaminyl-tRNA synthetase. The reaction takes place in the presence of glutamine and ATP through an activated gamma-phospho-Glu-tRNA(Gln). The polypeptide is Glutamyl-tRNA(Gln) amidotransferase subunit A (Maridesulfovibrio salexigens (strain ATCC 14822 / DSM 2638 / NCIMB 8403 / VKM B-1763) (Desulfovibrio salexigens)).